We begin with the raw amino-acid sequence, 200 residues long: Small ribosomal subunit protein uS4 (200 aa).

The region spanning 92-155 is the S4 RNA-binding domain; it reads SRLDAVVYSL…QNLDIIKESV (64 aa).

It belongs to the universal ribosomal protein uS4 family. Part of the 30S ribosomal subunit. Contacts protein S5. The interaction surface between S4 and S5 is involved in control of translational fidelity.

Its function is as follows. One of the primary rRNA binding proteins, it binds directly to 16S rRNA where it nucleates assembly of the body of the 30S subunit. Functionally, with S5 and S12 plays an important role in translational accuracy. This Staphylococcus epidermidis (strain ATCC 35984 / DSM 28319 / BCRC 17069 / CCUG 31568 / BM 3577 / RP62A) protein is Small ribosomal subunit protein uS4.